We begin with the raw amino-acid sequence, 460 residues long: CWF19-like protein 2 homolog (460 aa).

3 disordered regions span residues 38-78 (GKTF…EDEK), 103-175 (KLES…TGTA), and 193-227 (RRHDDESVDDIAEMQKGKKKSDEKDKKRKEKESIK). Residues 54–68 (GSQQVRNDVMKSSDS) are compositionally biased toward polar residues. Residues 84-106 (KILKAEMKGDTDLVKKLKRKLES) are a coiled coil. Basic and acidic residues-rich tracts occupy residues 113–131 (EPPKSKSKEVTMMRRDREG), 139–172 (RRSDSDRHGEGSSRMRREYEKSQDLDSMVREEKT), and 205–227 (EMQKGKKKSDEKDKKRKEKESIK). Positions 210–231 (KKKSDEKDKKRKEKESIKEHKR) form a coiled coil.

The protein belongs to the CWF19 family.

The protein is CWF19-like protein 2 homolog of Caenorhabditis elegans.